The primary structure comprises 216 residues: Serine acetyltransferase (216 aa).

The protein belongs to the transferase hexapeptide repeat family.

It localises to the cytoplasm. It carries out the reaction L-serine + acetyl-CoA = O-acetyl-L-serine + CoA. It functions in the pathway amino-acid biosynthesis; L-cysteine biosynthesis; L-cysteine from L-serine: step 1/2. Inhibited by cysteine. Functionally, catalyzes the acetylation of serine by acetyl-CoA to produce O-acetylserine (OAS). The polypeptide is Serine acetyltransferase (Bacillus licheniformis (strain ATCC 14580 / DSM 13 / JCM 2505 / CCUG 7422 / NBRC 12200 / NCIMB 9375 / NCTC 10341 / NRRL NRS-1264 / Gibson 46)).